The chain runs to 230 residues: 3-beta-hydroxysteroid-Delta(8),Delta(7)-isomerase (230 aa).

At Thr2 the chain carries N-acetylthreonine. The next 4 helical transmembrane spans lie at 29–49 (SHILVGLFSISGGLIVITWLL), 66–86 (LCWFAVCTFIHLVIEGWFSLY), 121–141 (METVTACLWGPLSLWVVIAFL), and 185–205 (FWFYFVFLNAVWLVIPSILVL). Residues 61–204 (GRRLALCWFA…VWLVIPSILV (144 aa)) form the EXPERA domain.

The protein belongs to the EBP family.

Its subcellular location is the endoplasmic reticulum membrane. The protein resides in the nucleus envelope. The protein localises to the cytoplasmic vesicle. The enzyme catalyses lathosterol = 5alpha-cholest-8-en-3beta-ol. The catalysed reaction is zymosterol = 5alpha-cholesta-7,24-dien-3beta-ol. It catalyses the reaction 5,6alpha-epoxy-5alpha-cholestan-3beta-ol + H2O = 5alpha-cholestane-3beta,5,6beta-triol. It carries out the reaction 5,6beta-epoxy-5beta-cholestan-3beta-ol + H2O = 5alpha-cholestane-3beta,5,6beta-triol. It functions in the pathway steroid biosynthesis; cholesterol biosynthesis. In terms of biological role, isomerase that catalyzes the conversion of Delta(8)-sterols to their corresponding Delta(7)-isomers. Functionally, component of the microsomal antiestrogen binding site (AEBS), a multiproteic complex at the ER membrane that consists of an association between EBP and 7-dehydrocholesterol reductase/DHCR7. This complex is responsible for cholesterol-5,6-epoxide hydrolase (ChEH) activity, which consists in the hydration of cholesterol-5,6-epoxides (5,6-EC) into cholestane-3beta,5alpha,6beta-triol (CT). The precise role of each component of this complex has not been described yet. This Mus musculus (Mouse) protein is 3-beta-hydroxysteroid-Delta(8),Delta(7)-isomerase.